Reading from the N-terminus, the 206-residue chain is uncharacterized protein (206 aa).

Positions 1 to 18 are cleaved as a signal peptide; sequence MKTYSLLLGLFISFGVLA.

This is an uncharacterized protein from Haemophilus influenzae (strain ATCC 51907 / DSM 11121 / KW20 / Rd).